The chain runs to 178 residues: Caveolin-1 (178 aa).

The residue at position 2 (Ser-2) is an N-acetylserine. Ser-2 bears the Phosphoserine mark. Positions 2-94 (SGGKYVDSEG…WKASFTTFTV (93 aa)) are required for homooligomerization. Topologically, residues 2–104 (SGGKYVDSEG…TKYWFYRLLS (103 aa)) are cytoplasmic. Lys-5 is modified (N6-acetyllysine; alternate). Residue Lys-5 forms a Glycyl lysine isopeptide (Lys-Gly) (interchain with G-Cter in ubiquitin); alternate linkage. The residue at position 6 (Tyr-6) is a Phosphotyrosine. At Ser-9 the chain carries Phosphoserine. Tyr-14 carries the post-translational modification Phosphotyrosine; by ABL1. A Phosphotyrosine modification is found at Tyr-25. Glycyl lysine isopeptide (Lys-Gly) (interchain with G-Cter in ubiquitin) cross-links involve residues Lys-26, Lys-30, Lys-39, Lys-47, and Lys-57. Residues 82–94 (DGIWKASFTTFTV) are interaction with CAVIN3. The segment at residues 105-125 (ALFGIPMALIWGIYFAILSFL) is an intramembrane region (helical). Residues 126–178 (HIWAVVPCIKSFLIEIQCVSRVYSIYVHTFCDPFFEAVGKIFSSIRINMQKEI) are Cytoplasmic-facing. The interacts with SPRY1, SPRY2, SPRY3 and SPRY4 stretch occupies residues 131–142 (VPCIKSFLIEIQ). 3 S-palmitoyl cysteine lipidation sites follow: Cys-133, Cys-143, and Cys-156. The tract at residues 149–160 (SIYVHTFCDPFF) is interacts with SPRY1, SPRY2, and SPRY4. The interacts with SPRY1, SPRY2, SPRY3 and SPRY4 stretch occupies residues 167-178 (FSSIRINMQKEI).

This sequence belongs to the caveolin family. In terms of assembly, homooligomer. Interacts with GLIPR2. Interacts with NOSTRIN. Interacts with SNAP25 and STX1A. Interacts (via the N-terminus) with DPP4; the interaction is direct. Interacts with CTNNB1, CDH1 and JUP. Interacts with PACSIN2; this interaction induces membrane tubulation. Interacts with SLC7A9. Interacts with BMX and BTK. Interacts with TGFBR1. Interacts with CAVIN3 (via leucine-zipper domain) in a cholesterol-sensitive manner. Interacts with CAVIN1. Interacts with EHD2 in a cholesterol-dependent manner. Forms a ternary complex with UBXN6 and VCP; mediates CAV1 targeting to lysosomes for degradation. Interacts with ABCG1; this interaction regulates ABCG1-mediated cholesterol efflux. Interacts with NEU3; this interaction enhances NEU3 sialidase activity within caveola. Interacts (via C-terminus) with SPRY1, SPRY2 (via C-terminus), SPRY3, and SPRY4. Interacts with IGFBP5; this interaction allows trafficking of IGFBP5 from the plasma membrane to the nucleus. Phosphorylated at Tyr-14 by ABL1 in response to oxidative stress. In terms of processing, ubiquitinated. Undergo monoubiquitination and multi- and/or polyubiquitination. Monoubiquitination of N-terminal lysines promotes integration in a ternary complex with UBXN6 and VCP which promotes oligomeric CAV1 targeting to lysosomes for degradation. Ubiquitinated by ZNRF1; leading to degradation and modulation of the TLR4-mediated immune response.

It localises to the golgi apparatus membrane. The protein resides in the cell membrane. The protein localises to the membrane. Its subcellular location is the caveola. It is found in the membrane raft. May act as a scaffolding protein within caveolar membranes. Forms a stable heterooligomeric complex with CAV2 that targets to lipid rafts and drives caveolae formation. Mediates the recruitment of CAVIN proteins (CAVIN1/2/3/4) to the caveolae. Interacts directly with G-protein alpha subunits and can functionally regulate their activity. Involved in the costimulatory signal essential for T-cell receptor (TCR)-mediated T-cell activation. Its binding to DPP4 induces T-cell proliferation and NF-kappa-B activation in a T-cell receptor/CD3-dependent manner. Recruits CTNNB1 to caveolar membranes and may regulate CTNNB1-mediated signaling through the Wnt pathway. Negatively regulates TGFB1-mediated activation of SMAD2/3 by mediating the internalization of TGFBR1 from membrane rafts leading to its subsequent degradation. Binds 20(S)-hydroxycholesterol (20(S)-OHC). This chain is Caveolin-1 (CAV1), found in Mustela putorius furo (European domestic ferret).